Consider the following 363-residue polypeptide: D-proline dehydrogenase (363 aa).

3–17 provides a ligand contact to FAD; sequence VAIVGGGIIGLFTAY.

The protein belongs to the DadA oxidoreductase family. As to quaternary structure, homotetramer. Requires FAD as cofactor.

Its subcellular location is the cell membrane. The enzyme catalyses D-proline + A = 1-pyrroline-2-carboxylate + AH2. Functionally, catalyzes the dehydrogenation of D-proline. Can also use other D-amino acids, but with lower efficiency. In Pyrobaculum islandicum (strain DSM 4184 / JCM 9189 / GEO3), this protein is D-proline dehydrogenase (dpdh).